Reading from the N-terminus, the 392-residue chain is Aspartate aminotransferase (392 aa).

Residues glycine 40, tryptophan 126, and asparagine 176 each contribute to the L-aspartate site. Lysine 239 carries the N6-(pyridoxal phosphate)lysine modification.

Belongs to the class-I pyridoxal-phosphate-dependent aminotransferase family. Homodimer. Pyridoxal 5'-phosphate serves as cofactor.

It localises to the cytoplasm. It catalyses the reaction L-aspartate + 2-oxoglutarate = oxaloacetate + L-glutamate. The chain is Aspartate aminotransferase from Bacillus sp. (strain YM-2).